The chain runs to 209 residues: Transcription factor atf31 (209 aa).

Over residues 90 to 103 (SKSPSIISEASHNS) the composition is skewed to polar residues. The segment at 90–133 (SKSPSIISEASHNSPSRELDDSGDENTSKLTGTKQSMLKARNRQ) is disordered. The region spanning 121–184 (GTKQSMLKAR…IKLRTLVFAH (64 aa)) is the bZIP domain. Positions 123-161 (KQSMLKARNRQAAQKCRIKKKKYLQTLQDQVNYYTSENK) are basic motif. A leucine-zipper region spans residues 163–177 (LLQSANDLREEIIKL).

This sequence belongs to the bZIP family.

The protein resides in the nucleus. This is Transcription factor atf31 (atf31) from Schizosaccharomyces pombe (strain 972 / ATCC 24843) (Fission yeast).